A 210-amino-acid chain; its full sequence is Imidazoleglycerol-phosphate dehydratase (210 aa).

It belongs to the imidazoleglycerol-phosphate dehydratase family.

The protein localises to the cytoplasm. The enzyme catalyses D-erythro-1-(imidazol-4-yl)glycerol 3-phosphate = 3-(imidazol-4-yl)-2-oxopropyl phosphate + H2O. Its pathway is amino-acid biosynthesis; L-histidine biosynthesis; L-histidine from 5-phospho-alpha-D-ribose 1-diphosphate: step 6/9. The protein is Imidazoleglycerol-phosphate dehydratase of Mycobacterium marinum (strain ATCC BAA-535 / M).